The primary structure comprises 607 residues: ATP-dependent zinc metalloprotease FtsH 2 (607 aa).

Topologically, residues 1–2 are cytoplasmic; the sequence is MR. A helical membrane pass occupies residues 3–23; sequence SLWIVLVLVLGSALLLQVMAA. At 24–99 the chain is on the periplasmic side; it reads SDDRIPYARF…PYTRVADELG (76 aa). Residues 100 to 120 traverse the membrane as a helical segment; that stretch reads LPPYLWLLLPLAGLAAMGHLA. Residues 121–607 are Cytoplasmic-facing; the sequence is SRRATTAGTI…LREMVASGEA (487 aa). 195–202 is a binding site for ATP; sequence GPPGTGKT. Histidine 418 is a Zn(2+) binding site. Glutamate 419 is a catalytic residue. Residues histidine 422 and aspartate 495 each coordinate Zn(2+).

In the central section; belongs to the AAA ATPase family. This sequence in the C-terminal section; belongs to the peptidase M41 family. In terms of assembly, homohexamer. Requires Zn(2+) as cofactor.

It is found in the cell inner membrane. Acts as a processive, ATP-dependent zinc metallopeptidase for both cytoplasmic and membrane proteins. Plays a role in the quality control of integral membrane proteins. The protein is ATP-dependent zinc metalloprotease FtsH 2 of Sorangium cellulosum (strain So ce56) (Polyangium cellulosum (strain So ce56)).